A 328-amino-acid polypeptide reads, in one-letter code: Endo-beta-1,4-glucanase B (328 aa).

Positions 1 to 17 (MKVNTLLVAVAAGTAMA) are cleaved as a signal peptide. Asn-95 carries N-linked (GlcNAc...) asparagine glycosylation. Glu-155 functions as the Proton donor in the catalytic mechanism. Glu-262 functions as the Nucleophile in the catalytic mechanism.

The protein belongs to the glycosyl hydrolase 5 (cellulase A) family.

It localises to the secreted. It carries out the reaction Endohydrolysis of (1-&gt;4)-beta-D-glucosidic linkages in cellulose, lichenin and cereal beta-D-glucans.. Its function is as follows. Has endoglucanase activity on substrates containing beta-1,4 glycosidic bonds, like in carboxymethylcellulose (CMC), hydroxyethylcellulose (HEC) and beta-glucan. Involved in the degradation of complex natural cellulosic substrates. This chain is Endo-beta-1,4-glucanase B (eglB), found in Emericella nidulans (strain FGSC A4 / ATCC 38163 / CBS 112.46 / NRRL 194 / M139) (Aspergillus nidulans).